Here is a 72-residue protein sequence, read N- to C-terminus: uncharacterized protein (72 aa).

This is an uncharacterized protein from Schizosaccharomyces pombe (strain 972 / ATCC 24843) (Fission yeast).